The primary structure comprises 264 residues: 5'-nucleotidase SurE (264 aa).

A divalent metal cation-binding residues include D10, D11, S43, and N97.

Belongs to the SurE nucleotidase family. It depends on a divalent metal cation as a cofactor.

The protein localises to the cytoplasm. It carries out the reaction a ribonucleoside 5'-phosphate + H2O = a ribonucleoside + phosphate. Its function is as follows. Nucleotidase that shows phosphatase activity on nucleoside 5'-monophosphates. This is 5'-nucleotidase SurE from Sulfurimonas denitrificans (strain ATCC 33889 / DSM 1251) (Thiomicrospira denitrificans (strain ATCC 33889 / DSM 1251)).